The sequence spans 387 residues: Eukaryotic translation initiation factor 3 subunit M (387 aa).

The PCI domain maps to 181-340; it reads LSSKVMIELL…RKVHISSTMH (160 aa).

The protein belongs to the eIF-3 subunit M family. Component of the eukaryotic translation initiation factor 3 (eIF-3) complex. The eIF-3 complex interacts with pix.

The protein resides in the cytoplasm. It localises to the golgi apparatus. Its function is as follows. Component of the eukaryotic translation initiation factor 3 (eIF-3) complex, which is involved in protein synthesis of a specialized repertoire of mRNAs and, together with other initiation factors, stimulates binding of mRNA and methionyl-tRNAi to the 40S ribosome. The eIF-3 complex specifically targets and initiates translation of a subset of mRNAs involved in cell proliferation. The polypeptide is Eukaryotic translation initiation factor 3 subunit M (Drosophila ananassae (Fruit fly)).